The following is a 189-amino-acid chain: UPF0340 protein EF_1967 (189 aa).

This sequence belongs to the UPF0340 family.

The polypeptide is UPF0340 protein EF_1967 (Enterococcus faecalis (strain ATCC 700802 / V583)).